Here is a 213-residue protein sequence, read N- to C-terminus: Thymidylate kinase (213 aa).

Position 7-14 (7-14 (GMDGSGKT)) interacts with ATP.

It belongs to the thymidylate kinase family.

The enzyme catalyses dTMP + ATP = dTDP + ADP. Functionally, phosphorylation of dTMP to form dTDP in both de novo and salvage pathways of dTTP synthesis. In Mycoplasma capricolum subsp. capricolum (strain California kid / ATCC 27343 / NCTC 10154), this protein is Thymidylate kinase.